A 943-amino-acid polypeptide reads, in one-letter code: UvrABC system protein A (943 aa).

31-38 (GLSGSGKS) is an ATP binding site. The segment at 253–280 (CPHCGYSVPELEPRLFSFNNPAGACPTC) adopts a C4-type zinc-finger fold. 2 consecutive ABC transporter domains span residues 310–587 (WDRR…PNSI) and 607–937 (LDKK…RFLK). An ATP-binding site is contributed by 640–647 (GVSGSGKS). A C4-type zinc finger spans residues 740–766 (CEACQGDGVLKVEMHFLPDVYVPCDQC).

It belongs to the ABC transporter superfamily. UvrA family. Forms a heterotetramer with UvrB during the search for lesions.

The protein resides in the cytoplasm. The UvrABC repair system catalyzes the recognition and processing of DNA lesions. UvrA is an ATPase and a DNA-binding protein. A damage recognition complex composed of 2 UvrA and 2 UvrB subunits scans DNA for abnormalities. When the presence of a lesion has been verified by UvrB, the UvrA molecules dissociate. The sequence is that of UvrABC system protein A from Haemophilus influenzae (strain ATCC 51907 / DSM 11121 / KW20 / Rd).